The primary structure comprises 976 residues: MNQVIKTIALCYQKYISRASNKTFSIHNTLSLSLLPKCLLGSLIIYTSHAFGEMELAISGHKYGKDRDAFTMISSCPEGTNYMINRKLILSEFSSLDKFSSGGAFKNLAGKIAFLGKHSSSSIHFKHLNINGFGSGIFSESAIEFSDLRKLVAFGSESTGGIFTARDDISFKNNHYIAFRNNIAKGNGGVILLQGDERGTVSFTDQQGAIIFANNQALVSPSIKHSGRGGAISGDFAGSRIIFLNNQQITFEENSAVHGGAIYNKNGVVEFLGNGGTLSFKENSTRANGGAIYTGKFKANQQTAPIIFSQNNANQKGGAIYAQYVNLEQNQDAIRFENNSAKEGGGAISSSQCAITAHNSITFSNNFAGDLGGGAILLGGKQPSLSLVAHNGNIAFIGNTMLPATKKASLPRNNSILVKESPYKIQFAANKNRSIIFFDPVIALSPSTSPVEINSPEHETPFFSPKGTIVFSGANLIDDAKEDIANRTSIFNQPVLLHNGTLSIESGAHLVVQSFKQTGGRISLSPGSSLALYTTNTLFHGNVSSTDPLEINGLSLGVDTSPSNLYSEIRAGSAPLKLSGSPDIHDPERLFYENRDSAASPYQMEILLSSDKIIDVSNFTIDAPVPNKEAGFQGSWHFSWQPNTVNNTKHKVLRASWIPTGEYILEPSRVGNAIPNSLWSTFLLLQTASHNLGDHLCNNSDLVPTSYLGLLIGGIGAEMRTYSAEKESFISRSGTTGTTIIRLTPTLTLSGGATHMFGDSFVTKLPEFIASEGMVQNVGLTQILGPLTVKSTLCAALDHNAMIRLSAQKNHTRAKWDTFGIRGTLGASYSLLDYENMVRIFTFANVEATNVLQKSFTETGYNPRSFARTRLTNIAVPVGIGYEFCLSNHSFALLGKGHIGYSRDIKRKNPVTFAQLAMNNFSWTANGCQVPTSAHTIANQLILRYKACSLYVNAVATKLESTYLSSSLSCGGYVGF.

Positions 1–50 (MNQVIKTIALCYQKYISRASNKTFSIHNTLSLSLLPKCLLGSLIIYTSHA) are cleaved as a signal peptide. Positions 671-976 (GNAIPNSLWS…SLSCGGYVGF (306 aa)) constitute an Autotransporter domain.

Belongs to the PMP outer membrane protein family.

The protein resides in the secreted. Its subcellular location is the cell wall. It localises to the cell outer membrane. The protein is Probable outer membrane protein PmpA (pmpA) of Chlamydia muridarum (strain MoPn / Nigg).